A 32-amino-acid polypeptide reads, in one-letter code: Apolipophorin-3 (32 aa).

The segment at 1-32 (DAPSTTPPQDXEKKAAEFQKTFTEQXNQLANK) is disordered. Positions 20 to 32 (KTFTEQXNQLANK) are enriched in polar residues.

Belongs to the insect apolipophorin-3 family. Equilibrium between a soluble monomer and a bound lipoprotein form. Apolipophorin-3 associates with lipophorin during lipid loading until each particle contains 9 or 14 molecules of apolipophorin-3. In terms of tissue distribution, hemolymph.

The protein localises to the secreted. Its function is as follows. Assists in the loading of diacylglycerol, generated from triacylglycerol stores in the fat body through the action of adipokinetic hormone, into lipophorin, the hemolymph lipoprotein. It increases the lipid carrying capacity of lipophorin by covering the expanding hydrophobic surface resulting from diacylglycerol uptake. It thus plays a critical role in the transport of lipids during flight in several species of insects. The protein is Apolipophorin-3 of Diatraea grandiosella (Southwestern corn borer).